Reading from the N-terminus, the 121-residue chain is MKIVISKPDKNKLRQKRHRRIRGKLSGTADRPRLNIFRSNTGIYAQVIDDVAGVTLASASTLDKEVSKGTKTEQAIVVGKLVAERAVAKGISEVVFDRGGYLYHGRVKALADSARENGLKF.

It belongs to the universal ribosomal protein uL18 family. Part of the 50S ribosomal subunit; part of the 5S rRNA/L5/L18/L25 subcomplex. Contacts the 5S and 23S rRNAs.

This is one of the proteins that bind and probably mediate the attachment of the 5S RNA into the large ribosomal subunit, where it forms part of the central protuberance. This Streptococcus thermophilus (strain CNRZ 1066) protein is Large ribosomal subunit protein uL18.